The primary structure comprises 311 residues: Pseudouridine-5'-phosphate glycosidase (311 aa).

Residue E32 is the Proton donor of the active site. Substrate contacts are provided by K96 and V116. Residue D148 participates in Mn(2+) binding. 150 to 152 (SAD) is a binding site for substrate. The active-site Nucleophile is K169.

This sequence belongs to the pseudouridine-5'-phosphate glycosidase family. In terms of assembly, homotrimer. Mn(2+) serves as cofactor.

The catalysed reaction is D-ribose 5-phosphate + uracil = psi-UMP + H2O. Functionally, catalyzes the reversible cleavage of pseudouridine 5'-phosphate (PsiMP) to ribose 5-phosphate and uracil. Functions biologically in the cleavage direction, as part of a pseudouridine degradation pathway. The polypeptide is Pseudouridine-5'-phosphate glycosidase (Roseiflexus sp. (strain RS-1)).